The sequence spans 589 residues: Transmembrane 9 superfamily member 1 (589 aa).

The first 27 residues, 1–27 (MTVLGHPRSWSCHCLPVLILLLGIGHG), serve as a signal peptide directing secretion. A glycan (N-linked (GlcNAc...) asparagine) is linked at Asn178. Transmembrane regions (helical) follow at residues 237–257 (LSII…AVIL), 310–330 (VLGV…MALL), 339–359 (GAIN…SGYV), and 373–393 (VWNI…TWSV). A glycan (N-linked (GlcNAc...) asparagine) is linked at Asn401. 3 helical membrane-spanning segments follow: residues 412–432 (ILLL…IGGI), 482–502 (GILF…SIAL), and 518–538 (SVLS…FYYA). N-linked (GlcNAc...) asparagine glycosylation is present at Asn542. A helical transmembrane segment spans residues 552–572 (FFGYSLLTGYVFFLMLGTISF).

Belongs to the nonaspanin (TM9SF) (TC 9.A.2) family.

The protein resides in the lysosome membrane. It localises to the cytoplasmic vesicle. Its subcellular location is the autophagosome membrane. In terms of biological role, plays an essential role in autophagy. The sequence is that of Transmembrane 9 superfamily member 1 (Tm9sf1) from Rattus norvegicus (Rat).